A 308-amino-acid chain; its full sequence is Adipolin (308 aa).

Positions 1–21 (MWAWGWAAAALLWLQTAGAGA) are cleaved as a signal peptide. Residues 36 to 119 (DSPNITTSNR…PPGSPGVGVT (84 aa)) form a disordered region. A glycan (N-linked (GlcNAc...) asparagine) is linked at Asn39. Positions 82–93 (RKRCRGRDKKSR) are enriched in basic residues. Positions 99-113 (PGPPGPPGPPGPPGS) are enriched in pro residues. Positions 153–308 (QRLVVEAFYC…SSFSGMLLGT (156 aa)) constitute a C1q domain.

Belongs to the adipolin/erythroferrone family. Homomultimer; disulfide-linked. Adipolin fC1QTNF12: homotrimer; disulfide-linked. Adipolin gC1QTNF12: homodimer; disulfide-linked. May interact with ERFE. In terms of processing, processed into Adipolin fC1QTNF12 and Adipolin gC1QTNF12 by FURIN. Insulin enhances endogenous C1QTNF12 cleavage. Widely expressed, with high expression in subcutaneous and epididymal white adipose tissues and brown adipose tissue. Expressed in adipocytes (at protein level).

It localises to the secreted. Insulin-sensitizing adipocyte-secreted protein (adipokine) that regulates glucose metabolism in liver and adipose tissue. Promotes glucose uptake in adipocytes and suppresses de novo glucose production in hepatocytes via the PI3K-Akt signaling pathway. Administration lead to reduction of blood glucose. Able to attenuate inflammation in fat tissue. Its function is as follows. Acts by activating the Akt signaling in hepatocytes and adipocytes. Not able to increase insulin-stimulated glucose uptake in adipocytes. Functionally, acts by activating the MAP kinase. Increases insulin-stimulated glucose uptake in adipocytes. This chain is Adipolin (C1qtnf12), found in Mus musculus (Mouse).